Consider the following 151-residue polypeptide: Arginine repressor (151 aa).

This sequence belongs to the ArgR family.

The protein resides in the cytoplasm. The protein operates within amino-acid biosynthesis; L-arginine biosynthesis [regulation]. In terms of biological role, regulates arginine biosynthesis genes. This Moorella thermoacetica (strain ATCC 39073 / JCM 9320) protein is Arginine repressor.